A 334-amino-acid chain; its full sequence is Protein FAM50B (334 aa).

The residue at position 2 (alanine 2) is an N-acetylalanine. Residues 122 to 175 (FTLDEEEGDQEDSRQAESAEAHSAGAKKNLGKNPDVDTSFLPDREREEEENRLR) are disordered. 2 stretches are compositionally biased toward basic and acidic residues: residues 132 to 141 (EDSRQAESAE) and 163 to 175 (PDRE…NRLR).

This sequence belongs to the FAM50 family. Widely expressed. Abundant in testis, where it is expressed in seminiferous tubules, not in the interstitium. At the cellular level, expressed in primary spermatocytes and round spermatids, but not detectable in spermatogonia, elongating spermatids, mature spermatozoa, Sertoli cells or Leydig cells.

The sequence is that of Protein FAM50B (Fam50b) from Mus musculus (Mouse).